A 202-amino-acid polypeptide reads, in one-letter code: 3-isopropylmalate dehydratase small subunit (202 aa).

This sequence belongs to the LeuD family. LeuD type 1 subfamily. Heterodimer of LeuC and LeuD.

It carries out the reaction (2R,3S)-3-isopropylmalate = (2S)-2-isopropylmalate. It participates in amino-acid biosynthesis; L-leucine biosynthesis; L-leucine from 3-methyl-2-oxobutanoate: step 2/4. Its function is as follows. Catalyzes the isomerization between 2-isopropylmalate and 3-isopropylmalate, via the formation of 2-isopropylmaleate. The protein is 3-isopropylmalate dehydratase small subunit of Rhizobium etli (strain ATCC 51251 / DSM 11541 / JCM 21823 / NBRC 15573 / CFN 42).